The chain runs to 271 residues: Formamidopyrimidine-DNA glycosylase (271 aa).

Residue Pro2 is the Schiff-base intermediate with DNA of the active site. The Proton donor role is filled by Glu3. Lys57 acts as the Proton donor; for beta-elimination activity in catalysis. DNA-binding residues include His90, Arg109, and Lys151. An FPG-type zinc finger spans residues 236–270; the sequence is HVYGRGGETCTQCGNLLSEIRLGQRTTVFCSICQP. The Proton donor; for delta-elimination activity role is filled by Arg260.

This sequence belongs to the FPG family. In terms of assembly, monomer. It depends on Zn(2+) as a cofactor.

It carries out the reaction Hydrolysis of DNA containing ring-opened 7-methylguanine residues, releasing 2,6-diamino-4-hydroxy-5-(N-methyl)formamidopyrimidine.. It catalyses the reaction 2'-deoxyribonucleotide-(2'-deoxyribose 5'-phosphate)-2'-deoxyribonucleotide-DNA = a 3'-end 2'-deoxyribonucleotide-(2,3-dehydro-2,3-deoxyribose 5'-phosphate)-DNA + a 5'-end 5'-phospho-2'-deoxyribonucleoside-DNA + H(+). In terms of biological role, involved in base excision repair of DNA damaged by oxidation or by mutagenic agents. Acts as a DNA glycosylase that recognizes and removes damaged bases. Has a preference for oxidized purines, such as 7,8-dihydro-8-oxoguanine (8-oxoG). Has AP (apurinic/apyrimidinic) lyase activity and introduces nicks in the DNA strand. Cleaves the DNA backbone by beta-delta elimination to generate a single-strand break at the site of the removed base with both 3'- and 5'-phosphates. This Shewanella oneidensis (strain ATCC 700550 / JCM 31522 / CIP 106686 / LMG 19005 / NCIMB 14063 / MR-1) protein is Formamidopyrimidine-DNA glycosylase.